The chain runs to 241 residues: Ribonuclease 3 (241 aa).

The 129-residue stretch at 16–144 (HAEFEKKINY…VIGAIFQDGG (129 aa)) folds into the RNase III domain. Glutamate 57 contacts Mg(2+). Residues aspartate 61 and glutamate 133 contribute to the active site. Glutamate 133 is a binding site for Mg(2+). Residues 171–240 (DAKSRLQEIL…AALAIKKIES (70 aa)) enclose the DRBM domain.

Belongs to the ribonuclease III family. As to quaternary structure, homodimer. It depends on Mg(2+) as a cofactor.

The protein resides in the cytoplasm. The catalysed reaction is Endonucleolytic cleavage to 5'-phosphomonoester.. In terms of biological role, digests double-stranded RNA. Involved in the processing of primary rRNA transcript to yield the immediate precursors to the large and small rRNAs (23S and 16S). Processes some mRNAs, and tRNAs when they are encoded in the rRNA operon. Processes pre-crRNA and tracrRNA of type II CRISPR loci if present in the organism. The sequence is that of Ribonuclease 3 from Desulfotalea psychrophila (strain LSv54 / DSM 12343).